Here is a 276-residue protein sequence, read N- to C-terminus: MAIKKYKPTSNGRRGMTVLDFSEITTDQPEKSLLAPLKKRAGRNNQGKITVRHQGGGHKRQYRIIDFKRDKDGIPGRVATIEYDPNRSANIALINYADGEKRYIIAPKNLKVGMEIMSGPDADIKIGNALPLENIPVGTLVHNIELKPGRGGQLVRAAGTSAQVLGKEGKYVIVRLASGEVRMILGKCRATVGEVGNEQHELVNIGKAGRARWLGIRPTVRGSVMNPVDHPHGGGEGKAPIGRKSPMTPWGKPTLGYKTRKKKNKSDKFIIRRRKK.

The segment at 224–276 (VMNPVDHPHGGGEGKAPIGRKSPMTPWGKPTLGYKTRKKKNKSDKFIIRRRKK) is disordered. Residues 258–276 (KTRKKKNKSDKFIIRRRKK) are compositionally biased toward basic residues.

This sequence belongs to the universal ribosomal protein uL2 family. In terms of assembly, part of the 50S ribosomal subunit. Forms a bridge to the 30S subunit in the 70S ribosome.

Its function is as follows. One of the primary rRNA binding proteins. Required for association of the 30S and 50S subunits to form the 70S ribosome, for tRNA binding and peptide bond formation. It has been suggested to have peptidyltransferase activity; this is somewhat controversial. Makes several contacts with the 16S rRNA in the 70S ribosome. This chain is Large ribosomal subunit protein uL2, found in Geobacillus stearothermophilus (Bacillus stearothermophilus).